The sequence spans 303 residues: N-acetyl-D-glucosamine kinase (303 aa).

ATP-binding positions include 4 to 11 (GFDIGGTK) and 133 to 140 (GVGGGLIF). His157, Cys177, Cys179, and Cys184 together coordinate Zn(2+).

It belongs to the ROK (NagC/XylR) family. NagK subfamily.

It carries out the reaction N-acetyl-D-glucosamine + ATP = N-acetyl-D-glucosamine 6-phosphate + ADP + H(+). It functions in the pathway cell wall biogenesis; peptidoglycan recycling. Functionally, catalyzes the phosphorylation of N-acetyl-D-glucosamine (GlcNAc) derived from cell-wall degradation, yielding GlcNAc-6-P. The chain is N-acetyl-D-glucosamine kinase from Escherichia coli O81 (strain ED1a).